Here is a 375-residue protein sequence, read N- to C-terminus: Zinc finger CCCH domain-containing protein 57 (375 aa).

5 C3H1-type zinc fingers span residues 42-70 (RHGE…HPHD), 87-115 (RIGQ…HPRN), 133-161 (RPNE…HPQT), 243-271 (RPGQ…HPRD), and 289-317 (RPGE…HPMR). Residues 352–375 (SVEAKPTSLPETTSAKDTIVDAQH) form a disordered region.

It is found in the nucleus. The chain is Zinc finger CCCH domain-containing protein 57 (ZFN3) from Arabidopsis thaliana (Mouse-ear cress).